Here is a 342-residue protein sequence, read N- to C-terminus: Trans-3-hydroxy-L-proline dehydratase (342 aa).

Ser90 serves as the catalytic Proton acceptor. Residues 91–92 (GS), Asp251, and 256–257 (GT) contribute to the substrate site.

The protein belongs to the proline racemase family.

It carries out the reaction trans-3-hydroxy-L-proline = 1-pyrroline-2-carboxylate + H2O. Its function is as follows. Catalyzes the dehydration of trans-3-hydroxy-L-proline (t3LHyp) to Delta(1)-pyrroline-2-carboxylate (Pyr2C). Is likely involved in a degradation pathway that converts t3LHyp to L-proline, which would allow P.denitrificans to grow on t3LHyp as a sole carbon source. Displays neither proline racemase activity nor 4-hydroxyproline 2-epimerase activity. The protein is Trans-3-hydroxy-L-proline dehydratase of Paracoccus denitrificans (strain Pd 1222).